Consider the following 1068-residue polypeptide: MITSIPLLLSVLWVPILSWINFSSTFFLFGIYYGFLTTLPIGPSQLLSIRAFLLEGNFSGIAAVSGLITGQLLIFLSIFYSPLYVLLIKPHLLTLLVLPYILFYWYKIKDLIDYQSLKPITSIKDTRISKIFFDSFIFQLFNPVVLPSPVLARLLNIFLFRYSNNFIFLLSSFLGWCFGQFLFVSLGKLLLFRIESDSPILYLLVKRIIYRTFSIIILSFSLLHLSRAPVPFITKKLNDNLQFNLSKPEDSFVLTKSWPTLFFDYRKWNRPLRYIENSRFSSQSPIKKKVSQYFFNISLSDGKPRLSFTYLPSLYYFEKNLQKSSINFNLFSSNEIYEKWIKNKKNKKLKIYKEFKNRFKFLDNGFFLAEIIEKKNILSTFEGNIFTKICDPLLIKQYDKKMIVSKSPWLLTEKSYKLTKTQKTLTFSKKDNKLKKWISNQCQEFEDKNFILPWEPLTQDARRILSLLINKSKKTKIDTNLKQMNFFDENATQLLNKQNLSSIENTRKKINRKSNLNWELILNLSPRQKILFLNYLQKDKWNTLKISWKNFFLGDFTQIKNILFLLTKIIKPDQNYQFQEINKEIPRWTSKLKNDKFDVIAIGVTDIRQRKVKNLGYLIKGKDKRRKIIRRFSQQSDFRRKLVKGSMRARRRKTLIWKIFQVKINSPFFLRIMDKPNLNVNNVLKIKPTFQNILEKKKKESLNQKALFIKRTKADRFAIANRWDFPLAQWGRSWLLLIQSHLRKYILLPILIIFKNVIRLFLFQIPEWNQDWYEWNKEIHIRCTYDGTEVSEKELPEQWLRDGLQIKIIYPFYLKPWHNIQNRNNLPNKKNEKLDLIYDDTNFLQNLVKTKEHSNNLVKKKKLNYCYLTAWGFQTNLPFGNIKKQPSFWKPIKKKLKKNMFFKPYQNLKNISTKNKLYKISDVENLKNFNSKKKEYINPNLNNLDFKKKNVVITKLNNQNTLLKQNTDNDIFSINFEYKTSIYINNLENLLKKKHISIEKYLKKQKTLNLKKKLIMIKQKTIKILKKNVQLIKKLPKNLKINIQKIYINLKINKTKLINNISKFFQDN.

A run of 6 helical transmembrane segments spans residues 11 to 31, 68 to 88, 92 to 112, 131 to 151, 166 to 186, and 213 to 233; these read VLWVPILSWINFSSTFFLFGI, ITGQLLIFLSIFYSPLYVLLI, LLTLLVLPYILFYWYKIKDLI, IFFDSFIFQLFNPVVLPSPVL, FIFLLSSFLGWCFGQFLFVSL, and FSIIILSFSLLHLSRAPVPFI.

This sequence belongs to the TIC214 family. In terms of assembly, part of the Tic complex.

Its subcellular location is the plastid. The protein resides in the chloroplast inner membrane. Functionally, involved in protein precursor import into chloroplasts. May be part of an intermediate translocation complex acting as a protein-conducting channel at the inner envelope. The protein is Putative protein TIC 214 N-terminal part of Marchantia polymorpha (Common liverwort).